A 119-amino-acid chain; its full sequence is Centrocin 1 (119 aa).

A signal peptide spans 1–20 (MMIKIAVVLCAVMATTMVRA). The propeptide occupies 21 to 50 (KYVEEQELADLLDLLISEEVSSPDDAVALQ). 6'-bromotryptophan occurs at positions 52 and 53. A disulfide bridge links Cys-75 with Cys-110. Residues 81–104 (SPQEARAKVLEAFPEMKEADLDEE) constitute a propeptide that is removed on maturation. Residue Asn-117 is modified to Asparagine amide.

In terms of assembly, heterodimer of a light and a heavy chain, probably disulfide-linked.

Functionally, has antimicrobial activity against Gram-negative bacteria, Gram-positive bacteria and against fungi with minimum inhibitory concentration (MIC) between 0.78 uM and 50 uM. Shows little hemolytic activity even at a concentration of 100 uM. Its function is as follows. Has no antimicrobial activity. Shows no hemolytic activity. The polypeptide is Centrocin 1 (Echinus esculentus (Sea urchin)).